The sequence spans 206 residues: 3-demethoxyubiquinol 3-hydroxylase (206 aa).

Glutamate 55, glutamate 85, histidine 88, glutamate 137, glutamate 169, and histidine 172 together coordinate Fe cation.

It belongs to the COQ7 family. Fe cation serves as cofactor.

Its subcellular location is the cell membrane. The enzyme catalyses a 5-methoxy-2-methyl-3-(all-trans-polyprenyl)benzene-1,4-diol + AH2 + O2 = a 3-demethylubiquinol + A + H2O. It functions in the pathway cofactor biosynthesis; ubiquinone biosynthesis. Functionally, catalyzes the hydroxylation of 2-nonaprenyl-3-methyl-6-methoxy-1,4-benzoquinol during ubiquinone biosynthesis. This Laribacter hongkongensis (strain HLHK9) protein is 3-demethoxyubiquinol 3-hydroxylase.